Here is a 341-residue protein sequence, read N- to C-terminus: Small ribosomal subunit biogenesis GTPase RsgA (341 aa).

The region spanning Arg-112–Leu-268 is the CP-type G domain. GTP is bound by residues Thr-157–Asp-160 and Gly-210–Thr-218. Residues Cys-290, Cys-295, His-297, and Cys-303 each contribute to the Zn(2+) site.

Belongs to the TRAFAC class YlqF/YawG GTPase family. RsgA subfamily. Monomer. Associates with 30S ribosomal subunit, binds 16S rRNA. Zn(2+) is required as a cofactor.

It is found in the cytoplasm. One of several proteins that assist in the late maturation steps of the functional core of the 30S ribosomal subunit. Helps release RbfA from mature subunits. May play a role in the assembly of ribosomal proteins into the subunit. Circularly permuted GTPase that catalyzes slow GTP hydrolysis, GTPase activity is stimulated by the 30S ribosomal subunit. In Xylella fastidiosa (strain Temecula1 / ATCC 700964), this protein is Small ribosomal subunit biogenesis GTPase RsgA.